The chain runs to 861 residues: Translation initiation factor IF-2 (861 aa).

A disordered region spans residues 107–272 (AQKQQDIQRA…QRKKKSKVVQ (166 aa)). The span at 115 to 128 (RAAEEAAAKERETE) shows a compositional bias: basic and acidic residues. Polar residues-rich tracts occupy residues 148–158 (SVQQEAANMDT) and 169–180 (VDESVSATTAGG). Residues 210 to 228 (NKEDSEVRREPADAEDLKR) show a composition bias toward basic and acidic residues. Residues 260-269 (RARQRKKKSK) are compositionally biased toward basic residues. Residues 362–531 (SRAPVVSVMG…LLQSEMLELT (170 aa)) form the tr-type G domain. Positions 371 to 378 (GHVDHGKT) are G1. 371–378 (GHVDHGKT) serves as a coordination point for GTP. The G2 stretch occupies residues 396–400 (GITQH). A G3 region spans residues 417–420 (DTPG). GTP-binding positions include 417–421 (DTPGH) and 471–474 (NKMD). The tract at residues 471-474 (NKMD) is G4. Residues 507-509 (SAH) form a G5 region.

This sequence belongs to the TRAFAC class translation factor GTPase superfamily. Classic translation factor GTPase family. IF-2 subfamily.

It localises to the cytoplasm. Functionally, one of the essential components for the initiation of protein synthesis. Protects formylmethionyl-tRNA from spontaneous hydrolysis and promotes its binding to the 30S ribosomal subunits. Also involved in the hydrolysis of GTP during the formation of the 70S ribosomal complex. This is Translation initiation factor IF-2 from Hahella chejuensis (strain KCTC 2396).